We begin with the raw amino-acid sequence, 1050 residues long: uncharacterized protein (1050 aa).

3 coiled-coil regions span residues 1–420 (MEKV…TAKM), 463–627 (YSLL…IREL), and 692–981 (NDSK…NLLS).

This is an uncharacterized protein from Arabidopsis thaliana (Mouse-ear cress).